We begin with the raw amino-acid sequence, 371 residues long: Chaperone protein DnaJ (371 aa).

Residues 5 to 69 (DYYEILGIAK…QKRAAYDQHG (65 aa)) enclose the J domain. The CR-type zinc finger occupies 127-205 (GASKEIHITT…CRGQGKVEEP (79 aa)). Zn(2+)-binding residues include Cys-140, Cys-143, Cys-157, Cys-160, Cys-179, Cys-182, Cys-193, and Cys-196. 4 CXXCXGXG motif repeats span residues 140-147 (CEHCKGSG), 157-164 (CTTCRGVG), 179-186 (CPRCHGQG), and 193-200 (CRQCRGQG).

The protein belongs to the DnaJ family. As to quaternary structure, homodimer. The cofactor is Zn(2+).

Its subcellular location is the cytoplasm. In terms of biological role, participates actively in the response to hyperosmotic and heat shock by preventing the aggregation of stress-denatured proteins and by disaggregating proteins, also in an autonomous, DnaK-independent fashion. Unfolded proteins bind initially to DnaJ; upon interaction with the DnaJ-bound protein, DnaK hydrolyzes its bound ATP, resulting in the formation of a stable complex. GrpE releases ADP from DnaK; ATP binding to DnaK triggers the release of the substrate protein, thus completing the reaction cycle. Several rounds of ATP-dependent interactions between DnaJ, DnaK and GrpE are required for fully efficient folding. Also involved, together with DnaK and GrpE, in the DNA replication of plasmids through activation of initiation proteins. This Hamiltonella defensa subsp. Acyrthosiphon pisum (strain 5AT) protein is Chaperone protein DnaJ.